We begin with the raw amino-acid sequence, 136 residues long: Large ribosomal subunit protein uL16 (136 aa).

It belongs to the universal ribosomal protein uL16 family. In terms of assembly, part of the 50S ribosomal subunit.

Functionally, binds 23S rRNA and is also seen to make contacts with the A and possibly P site tRNAs. The chain is Large ribosomal subunit protein uL16 from Pectobacterium atrosepticum (strain SCRI 1043 / ATCC BAA-672) (Erwinia carotovora subsp. atroseptica).